Here is a 257-residue protein sequence, read N- to C-terminus: Thiazole synthase (257 aa).

Catalysis depends on K96, which acts as the Schiff-base intermediate with DXP. 1-deoxy-D-xylulose 5-phosphate-binding positions include G157, 184 to 185, and 206 to 207; these read AG and NT.

It belongs to the ThiG family. In terms of assembly, homotetramer. Forms heterodimers with either ThiH or ThiS.

It is found in the cytoplasm. The enzyme catalyses [ThiS sulfur-carrier protein]-C-terminal-Gly-aminoethanethioate + 2-iminoacetate + 1-deoxy-D-xylulose 5-phosphate = [ThiS sulfur-carrier protein]-C-terminal Gly-Gly + 2-[(2R,5Z)-2-carboxy-4-methylthiazol-5(2H)-ylidene]ethyl phosphate + 2 H2O + H(+). It functions in the pathway cofactor biosynthesis; thiamine diphosphate biosynthesis. In terms of biological role, catalyzes the rearrangement of 1-deoxy-D-xylulose 5-phosphate (DXP) to produce the thiazole phosphate moiety of thiamine. Sulfur is provided by the thiocarboxylate moiety of the carrier protein ThiS. In vitro, sulfur can be provided by H(2)S. The chain is Thiazole synthase from Bartonella bacilliformis (strain ATCC 35685 / KC583 / Herrer 020/F12,63).